The sequence spans 288 residues: tRNA dimethylallyltransferase (288 aa).

Position 17–24 (17–24) interacts with ATP; it reads GPTASGKT. Position 19 to 24 (19 to 24) interacts with substrate; sequence TASGKT.

The protein belongs to the IPP transferase family. Monomer. It depends on Mg(2+) as a cofactor.

The catalysed reaction is adenosine(37) in tRNA + dimethylallyl diphosphate = N(6)-dimethylallyladenosine(37) in tRNA + diphosphate. In terms of biological role, catalyzes the transfer of a dimethylallyl group onto the adenine at position 37 in tRNAs that read codons beginning with uridine, leading to the formation of N6-(dimethylallyl)adenosine (i(6)A). In Jannaschia sp. (strain CCS1), this protein is tRNA dimethylallyltransferase.